We begin with the raw amino-acid sequence, 325 residues long: NADH-quinone oxidoreductase subunit H (325 aa).

8 helical membrane passes run 11–31, 81–101, 114–134, 154–174, 186–206, 237–257, 265–285, and 304–324; these read ILLT…CGAF, VIFT…FAIV, IGIL…LFAG, LSYE…AGSF, VWNV…GVAV, FFVG…TLFF, LPPF…FILI, and ICLP…LWQA.

This sequence belongs to the complex I subunit 1 family. As to quaternary structure, NDH-1 is composed of 13 different subunits. Subunits NuoA, H, J, K, L, M, N constitute the membrane sector of the complex.

Its subcellular location is the cell inner membrane. The catalysed reaction is a quinone + NADH + 5 H(+)(in) = a quinol + NAD(+) + 4 H(+)(out). In terms of biological role, NDH-1 shuttles electrons from NADH, via FMN and iron-sulfur (Fe-S) centers, to quinones in the respiratory chain. The immediate electron acceptor for the enzyme in this species is believed to be ubiquinone. Couples the redox reaction to proton translocation (for every two electrons transferred, four hydrogen ions are translocated across the cytoplasmic membrane), and thus conserves the redox energy in a proton gradient. This subunit may bind ubiquinone. The protein is NADH-quinone oxidoreductase subunit H of Escherichia coli O7:K1 (strain IAI39 / ExPEC).